A 248-amino-acid polypeptide reads, in one-letter code: Adenylate kinase isoenzyme 6 homolog HBR1 (248 aa).

ATP contacts are provided by Gly-19, Gly-21, Lys-22, Ser-23, and Ser-24. The NMPbind stretch occupies residues 49–72 (NISEIAKERDCIESYDAKLDTSIV). Positions 124 to 134 (TRNYNDLKLQE) are LID. Arg-125 contacts ATP. The tract at residues 188–248 (DGVSNELNKQ…EMEHTEDIAQ (61 aa)) is disordered. Positions 202–238 (DSSDEGDDNSDSDEYELEEDEQEEEEEREEYDEETNE) are enriched in acidic residues. Basic and acidic residues predominate over residues 239 to 248 (EMEHTEDIAQ).

Belongs to the adenylate kinase family. AK6 subfamily. In terms of assembly, interacts with small ribosomal subunit protein uS11. Not a structural component of 43S pre-ribosomes, but transiently interacts with them by binding to uS11.

The protein resides in the cytoplasm. The protein localises to the nucleus. The catalysed reaction is AMP + ATP = 2 ADP. It carries out the reaction ATP + H2O = ADP + phosphate + H(+). In terms of biological role, broad-specificity nucleoside monophosphate (NMP) kinase that catalyzes the reversible transfer of the terminal phosphate group between nucleoside triphosphates and monophosphates. Also has ATPase activity. Involved in the late cytoplasmic maturation steps of the 40S ribosomal particles, specifically 18S rRNA maturation. While NMP activity is not required for ribosome maturation, ATPase activity is. Associates transiently with small ribosomal subunit protein uS11. ATP hydrolysis breaks the interaction with uS11. May temporarily remove uS11 from the ribosome to enable a conformational change of the ribosomal RNA that is needed for the final maturation step of the small ribosomal subunit. Its NMP activity may have a role in nuclear energy homeostasis. Induces transcription of mating-type proteins ALPHA1 and ALPHA2 and moderately represses transcription of mating-type protein A1 in response to hemoglobin and growth signals. Involved in the induction of a high affinity fibronectin receptor by sub-inhibitory dosages of caspofungin. This Candida albicans (strain SC5314 / ATCC MYA-2876) (Yeast) protein is Adenylate kinase isoenzyme 6 homolog HBR1 (HBR1).